A 227-amino-acid polypeptide reads, in one-letter code: Orotidine 5'-phosphate decarboxylase (227 aa).

Residues D12, K34, 61-70 (DLKLHDIPNT), T117, R178, Q187, G207, and R208 each bind substrate. K63 functions as the Proton donor in the catalytic mechanism.

It belongs to the OMP decarboxylase family. Type 1 subfamily. As to quaternary structure, homodimer.

It carries out the reaction orotidine 5'-phosphate + H(+) = UMP + CO2. Its pathway is pyrimidine metabolism; UMP biosynthesis via de novo pathway; UMP from orotate: step 2/2. Its function is as follows. Catalyzes the decarboxylation of orotidine 5'-monophosphate (OMP) to uridine 5'-monophosphate (UMP). This chain is Orotidine 5'-phosphate decarboxylase, found in Anaeromyxobacter dehalogenans (strain 2CP-1 / ATCC BAA-258).